Here is a 541-residue protein sequence, read N- to C-terminus: Zinc finger protein 503 (541 aa).

Over residues 1 to 18 (MSNSPLGSGSRISHFTTE) the composition is skewed to polar residues. Disordered stretches follow at residues 1 to 49 (MSNS…QAGR) and 97 to 255 (TCSQ…SSSV). Positions 137–157 (AEDKSSFKPYSKHPDKKDQSA) are enriched in basic and acidic residues. Residues 236–255 (SLSAAPSPTPASSSSSSSSV) are compositionally biased toward low complexity. The C2H2-type zinc finger occupies 411–439 (HVCNWVSATGPCDKRFSSSEELLGHLRTH). The disordered stretch occupies residues 474 to 511 (GASPGPLTLRSPHHHPLGLSSSRYHPYSKSPLPSGGAP).

Belongs to the Elbow/Noc family.

The protein localises to the nucleus. In terms of biological role, may function as a transcriptional repressor. The polypeptide is Zinc finger protein 503 (znf503) (Xenopus tropicalis (Western clawed frog)).